Here is a 370-residue protein sequence, read N- to C-terminus: Phospho-N-acetylmuramoyl-pentapeptide-transferase (370 aa).

11 helical membrane passes run 21-41 (PTSILLIIGIIVVSIIVDLFI), 46-66 (LLVPLISSIIISAIITKWGII), 92-112 (PSMGGIFIVPISLILTNLFAL), 117-137 (FSKQLVALSFLSLAYMLIGLI), 151-171 (LSVKSKVILQTIVGIIFLVLI), 181-201 (ILIFGNNTINLGLLFWPIALF), 217-237 (DGLASGCGAIVFTGLAIELII), 243-263 (NYAIASFCITMAGAWLGFLIF), 270-290 (VFMGDTGSLAMGASLAGVALL), 298-318 (LIMGVIFLAESVSVIIQVGVF), and 349-369 (TIIVQNFWLITICFVCMAIML).

This sequence belongs to the glycosyltransferase 4 family. MraY subfamily. It depends on Mg(2+) as a cofactor.

It localises to the cell inner membrane. The catalysed reaction is UDP-N-acetyl-alpha-D-muramoyl-L-alanyl-gamma-D-glutamyl-meso-2,6-diaminopimeloyl-D-alanyl-D-alanine + di-trans,octa-cis-undecaprenyl phosphate = di-trans,octa-cis-undecaprenyl diphospho-N-acetyl-alpha-D-muramoyl-L-alanyl-D-glutamyl-meso-2,6-diaminopimeloyl-D-alanyl-D-alanine + UMP. Its pathway is cell wall biogenesis; peptidoglycan biosynthesis. Catalyzes the initial step of the lipid cycle reactions in the biosynthesis of the cell wall peptidoglycan: transfers peptidoglycan precursor phospho-MurNAc-pentapeptide from UDP-MurNAc-pentapeptide onto the lipid carrier undecaprenyl phosphate, yielding undecaprenyl-pyrophosphoryl-MurNAc-pentapeptide, known as lipid I. In Prochlorococcus marinus (strain SARG / CCMP1375 / SS120), this protein is Phospho-N-acetylmuramoyl-pentapeptide-transferase.